We begin with the raw amino-acid sequence, 268 residues long: Ribosomal RNA small subunit methyltransferase A (268 aa).

Asn16, Leu18, Gly43, Glu64, Asp89, and Asn110 together coordinate S-adenosyl-L-methionine.

It belongs to the class I-like SAM-binding methyltransferase superfamily. rRNA adenine N(6)-methyltransferase family. RsmA subfamily.

It is found in the cytoplasm. It carries out the reaction adenosine(1518)/adenosine(1519) in 16S rRNA + 4 S-adenosyl-L-methionine = N(6)-dimethyladenosine(1518)/N(6)-dimethyladenosine(1519) in 16S rRNA + 4 S-adenosyl-L-homocysteine + 4 H(+). Its function is as follows. Specifically dimethylates two adjacent adenosines (A1518 and A1519) in the loop of a conserved hairpin near the 3'-end of 16S rRNA in the 30S particle. May play a critical role in biogenesis of 30S subunits. This chain is Ribosomal RNA small subunit methyltransferase A, found in Pseudomonas aeruginosa (strain ATCC 15692 / DSM 22644 / CIP 104116 / JCM 14847 / LMG 12228 / 1C / PRS 101 / PAO1).